We begin with the raw amino-acid sequence, 436 residues long: Protein arginine methyltransferase NDUFAF7, mitochondrial (436 aa).

The N-terminal 41 residues, 1 to 41 (MNALVRRCVARAGLPCIWRGKCYSSGNEPAESNQVTPMLRH), are a transit peptide targeting the mitochondrion. The segment at 411 to 436 (GSQERNACQSKTPSSSVAGFDELVWQ) is disordered. Over residues 413 to 427 (QERNACQSKTPSSSV) the composition is skewed to polar residues.

The protein belongs to the NDUFAF7 family. As to quaternary structure, interacts with NDUFS2.

It is found in the mitochondrion. The enzyme catalyses L-arginyl-[protein] + 2 S-adenosyl-L-methionine = N(omega),N(omega)'-dimethyl-L-arginyl-[protein] + 2 S-adenosyl-L-homocysteine + 2 H(+). Its function is as follows. Arginine methyltransferase involved in the assembly or stability of mitochondrial NADH:ubiquinone oxidoreductase complex (complex I). Acts by mediating symmetric dimethylation of 'Arg-118' of NDUFS2 after it assembles into the complex I, stabilizing the early intermediate complex. The protein is Protein arginine methyltransferase NDUFAF7, mitochondrial of Mus musculus (Mouse).